The sequence spans 355 residues: Alkanal monooxygenase alpha chain (355 aa).

It belongs to the bacterial luciferase oxidoreductase family. In terms of assembly, heterodimer of an alpha and a beta chain.

It carries out the reaction a long-chain fatty aldehyde + FMNH2 + O2 = a long-chain fatty acid + hnu + FMN + H2O + 2 H(+). Functionally, light-emitting reaction in luminous bacteria. The protein is Alkanal monooxygenase alpha chain (luxA) of Vibrio harveyi (Beneckea harveyi).